Consider the following 195-residue polypeptide: MELNIHNAEILLSAANKSHYPQDELPEIALAGRSNVGKSSFINTMLNRKNLARTSGKPGKTQLLNFFNIDDKMRFVDVPGYGYARVSKKEREKWGCMIEEYLTTRENLRAVVSLVDLRHDPSADDVQMYEFLKYYEIPVIIVATKADKIPRGKWNKHESAIKKKLNFDPSDDFILFSSVSKAGMDEAWDAILEKL.

The 172-residue stretch at 24-195 (ELPEIALAGR…EAWDAILEKL (172 aa)) folds into the EngB-type G domain. GTP contacts are provided by residues 32–39 (GRSNVGKS), 59–63 (GKTQL), 77–80 (DVPG), 144–147 (TKAD), and 176–178 (FSS). Residues Ser39 and Thr61 each contribute to the Mg(2+) site.

It belongs to the TRAFAC class TrmE-Era-EngA-EngB-Septin-like GTPase superfamily. EngB GTPase family. The cofactor is Mg(2+).

Functionally, necessary for normal cell division and for the maintenance of normal septation. The sequence is that of Probable GTP-binding protein EngB from Streptococcus pneumoniae (strain P1031).